Reading from the N-terminus, the 369-residue chain is METLSQRLDACQNKILDCYEKDSKCIIDHIDYWKAVRHEYVLYYKARENDINVLNHQMVPSLQVCKAKACSAIELQIALEAISNTIYKNEEWTLRDTCDELWRTEPKNCFKKEGQHIEVWFDGNKNNCMEYVVWKFIYYNGECGWCKVSSGVDYRGIYYMHDGHKTYYTDFEQEAKKYGCTNIWEVHMETESIYCPDSVSSTCRYNVPPVETVNEYNNHRTTTTASTFVGAQDAAVSHRPGKRPRASESEPDSSRESYAHCVTTDTDISNNANSRSPRINTQSHCGDKTTPVIHLKGEANRLKCCRYRFQKYKTLFTDVTTTYHWTSTDNKDSSIITILYKDETQRDTFLNVVKIPPSVQVILGQMSCP.

The tract at residues 1–200 (METLSQRLDA…ESIYCPDSVS (200 aa)) is transactivation domain. The tract at residues 230 to 257 (GAQDAAVSHRPGKRPRASESEPDSSRES) is disordered. A compositionally biased stretch (basic and acidic residues) spans 245–257 (RASESEPDSSRES). Residues 289-369 (TTPVIHLKGE…QVILGQMSCP (81 aa)) are DNA-binding domain. K296 is covalently cross-linked (Glycyl lysine isopeptide (Lys-Gly) (interchain with G-Cter in SUMO)).

This sequence belongs to the papillomaviridae E2 protein family. As to quaternary structure, binds DNA as homodimer. Interacts with protein E1; this interaction greatly increases E1 DNA-binding activity. Interacts with protein L1; this interaction enhances E2-dependent replication and transcription activation. Interacts with protein L2; this interaction inhibits E2 transcriptional activity but not DNA replication function E2. Interacts with protein E7; this interaction inhibits E7 oncogenic activity. Interacts with host TAF1; this interaction modulates E2-dependent transcriptional regulation. Interacts with host BRD4; this interaction mediates E2 transcriptional activation function. Additionally, the interaction with host BRD4 on mitotic chromosomes mediates tethering of the viral genome. Interacts with host TOPBP1; this interaction is required for optimal viral DNA replication. In terms of processing, phosphorylated. Sumoylation plays a regulatory role in E2 transcriptional activity.

The protein resides in the host nucleus. Functionally, plays a role in the initiation of viral DNA replication. A dimer of E2 interacts with a dimer of E1 in order to improve specificity of E1 DNA binding activity. Once the complex recognizes and binds DNA at specific sites, the E2 dimer is removed from DNA. E2 also regulates viral transcription through binding to the E2RE response element (5'-ACCNNNNNNGGT-3') present in multiple copies in the regulatory regions of the viral genome. Activates or represses transcription depending on E2RE's position with regards to proximal promoter elements including the TATA-box. Repression occurs by sterically hindering the assembly of the transcription initiation complex. The sequence is that of Regulatory protein E2 from Homo sapiens (Human).